Reading from the N-terminus, the 268-residue chain is Tryptophan synthase alpha chain (268 aa).

Catalysis depends on proton acceptor residues glutamate 49 and aspartate 60.

This sequence belongs to the TrpA family. Tetramer of two alpha and two beta chains.

It catalyses the reaction (1S,2R)-1-C-(indol-3-yl)glycerol 3-phosphate + L-serine = D-glyceraldehyde 3-phosphate + L-tryptophan + H2O. The protein operates within amino-acid biosynthesis; L-tryptophan biosynthesis; L-tryptophan from chorismate: step 5/5. Functionally, the alpha subunit is responsible for the aldol cleavage of indoleglycerol phosphate to indole and glyceraldehyde 3-phosphate. The polypeptide is Tryptophan synthase alpha chain (Shigella flexneri serotype 5b (strain 8401)).